A 258-amino-acid chain; its full sequence is Thiazole synthase (258 aa).

The active-site Schiff-base intermediate with DXP is Lys-97. 1-deoxy-D-xylulose 5-phosphate contacts are provided by residues Gly-158, 184–185, and 206–207; these read AG and NT.

Belongs to the ThiG family. Homotetramer. Forms heterodimers with either ThiH or ThiS.

The protein resides in the cytoplasm. It catalyses the reaction [ThiS sulfur-carrier protein]-C-terminal-Gly-aminoethanethioate + 2-iminoacetate + 1-deoxy-D-xylulose 5-phosphate = [ThiS sulfur-carrier protein]-C-terminal Gly-Gly + 2-[(2R,5Z)-2-carboxy-4-methylthiazol-5(2H)-ylidene]ethyl phosphate + 2 H2O + H(+). It functions in the pathway cofactor biosynthesis; thiamine diphosphate biosynthesis. Its function is as follows. Catalyzes the rearrangement of 1-deoxy-D-xylulose 5-phosphate (DXP) to produce the thiazole phosphate moiety of thiamine. Sulfur is provided by the thiocarboxylate moiety of the carrier protein ThiS. In vitro, sulfur can be provided by H(2)S. This chain is Thiazole synthase, found in Bacteroides fragilis (strain ATCC 25285 / DSM 2151 / CCUG 4856 / JCM 11019 / LMG 10263 / NCTC 9343 / Onslow / VPI 2553 / EN-2).